A 460-amino-acid chain; its full sequence is MMEFDTIAAISTPMGEGAIAIVRLSGPKAVETADRVYRGANRLTDVPTHTIHYGKLVEQTTEQVVDEVMVSVMRAPKTFTREDVVELNCHGGIVAVNRVLELILEQPDVRLAEPGEFTKRAFLNGRIDLSQAEAVMDLIRAKTDRAMTVAVGQIEGRLSKLVQDLREQLLQTIASIEVNIDYPEYDAEEMTQQIVQKDAGEVRRILTELLATARQGKILREGLSTAIIGRPNVGKSSLLNTLVQEAKAIVTDIAGTTRDTIEEYVNVRGVPLKLIDTAGIRETEDIVERMGVEKSRQALNSADLILLVLNGNDALTEEDVLLFEAIRGMNAIIIVNKSDLTQAIDLTRVSELADGRPVVTTSLLEEAGVTDLEAAIASLFFEQGVEGQDMTYVSNARHIQLIKQASQMIEDALGAAEASMPIDMVQIDLRRAWDTLGEINGDTAQDSLLDKLFSQFCLGK.

Residues Arg23, Glu86, and Arg126 each contribute to the (6S)-5-formyl-5,6,7,8-tetrahydrofolate site. The TrmE-type G domain maps to 222–381 (GLSTAIIGRP…LEAAIASLFF (160 aa)). K(+) is bound at residue Asn232. GTP-binding positions include 232–237 (NVGKSS), 251–257 (TDIAGTT), and 276–279 (DTAG). Ser236 contributes to the Mg(2+) binding site. K(+) is bound by residues Thr251, Ile253, and Thr256. Thr257 provides a ligand contact to Mg(2+). Lys460 provides a ligand contact to (6S)-5-formyl-5,6,7,8-tetrahydrofolate.

Belongs to the TRAFAC class TrmE-Era-EngA-EngB-Septin-like GTPase superfamily. TrmE GTPase family. Homodimer. Heterotetramer of two MnmE and two MnmG subunits. Requires K(+) as cofactor.

It is found in the cytoplasm. Its function is as follows. Exhibits a very high intrinsic GTPase hydrolysis rate. Involved in the addition of a carboxymethylaminomethyl (cmnm) group at the wobble position (U34) of certain tRNAs, forming tRNA-cmnm(5)s(2)U34. The sequence is that of tRNA modification GTPase MnmE from Exiguobacterium sibiricum (strain DSM 17290 / CCUG 55495 / CIP 109462 / JCM 13490 / 255-15).